The primary structure comprises 182 residues: Isopentenyl-diphosphate Delta-isomerase (182 aa).

Residues H25 and H32 each contribute to the Mn(2+) site. In terms of domain architecture, Nudix hydrolase spans 30 to 164 (RLHLAFSSWL…PWAFSPWMVM (135 aa)). C67 is an active-site residue. H69 lines the Mn(2+) pocket. E87 provides a ligand contact to Mg(2+). Mn(2+)-binding residues include E114 and E116. E116 is an active-site residue.

It belongs to the IPP isomerase type 1 family. As to quaternary structure, homodimer. It depends on Mg(2+) as a cofactor. Mn(2+) is required as a cofactor.

The protein localises to the cytoplasm. The enzyme catalyses isopentenyl diphosphate = dimethylallyl diphosphate. It functions in the pathway isoprenoid biosynthesis; dimethylallyl diphosphate biosynthesis; dimethylallyl diphosphate from isopentenyl diphosphate: step 1/1. Functionally, catalyzes the 1,3-allylic rearrangement of the homoallylic substrate isopentenyl (IPP) to its highly electrophilic allylic isomer, dimethylallyl diphosphate (DMAPP). This chain is Isopentenyl-diphosphate Delta-isomerase, found in Escherichia coli O139:H28 (strain E24377A / ETEC).